A 2564-amino-acid polypeptide reads, in one-letter code: Histone-lysine N-methyltransferase SETD2 (2564 aa).

The segment covering 1-11 (MKQLQPQPPPK) has biased composition (pro residues). Residues 1–30 (MKQLQPQPPPKMGDFYDPEHPTPEEEENEA) are disordered. A compositionally biased stretch (basic and acidic residues) spans 17–30 (DPEHPTPEEEENEA). Position 131 is a phosphoserine (Ser131). Disordered regions lie at residues 180 to 211 (STTVDSPPSSPPPPPPPAQATTLSSPAPVTEP), 272 to 561 (NEQA…TLSK), and 607 to 626 (PEREKAGSPAPSNRLNDSPT). Residues 187–197 (PSSPPPPPPPA) show a composition bias toward pro residues. Residues 198 to 207 (QATTLSSPAP) are compositionally biased toward low complexity. The span at 278 to 290 (SSKKEDSHIGKDE) shows a compositional bias: basic and acidic residues. Phosphoserine occurs at positions 321, 323, and 344. Basic and acidic residues-rich tracts occupy residues 335–400 (RSHD…ERER), 421–432 (RSERSHYYDSDR), 439–467 (PYRERTRYSRPYTDNRARESSDSEEEYKK), and 479–528 (SYRD…EAIK). Lys359 is covalently cross-linked (Glycyl lysine isopeptide (Lys-Gly) (interchain with G-Cter in SUMO2)). Residue Ser422 is modified to Phosphoserine. Phosphoserine occurs at positions 532, 614, and 624. A compositionally biased stretch (polar residues) spans 616–625 (APSNRLNDSP). Thr626 carries the phosphothreonine modification. A Glycyl lysine isopeptide (Lys-Gly) (interchain with G-Cter in SUMO2) cross-link involves residue Lys637. Residues Ser698, Ser708, Ser744, and Ser754 each carry the phosphoserine modification. A Glycyl lysine isopeptide (Lys-Gly) (interchain with G-Cter in SUMO2) cross-link involves residue Lys776. Disordered stretches follow at residues 964-995 (EEGNSILPERRGRPEISLDERGEGGHVHTSDD), 1036-1101 (EDYS…SDHW), 1133-1233 (LHKG…LGKT), 1264-1352 (QEKP…FSDQ), and 1393-1443 (LEKN…PGSA). A compositionally biased stretch (basic and acidic residues) spans 971-994 (PERRGRPEISLDERGEGGHVHTSD). Over residues 1045 to 1058 (SNDESDSEDTDSDD) the composition is skewed to acidic residues. Low complexity predominate over residues 1084–1095 (SPCSSRSSQSYR). The residue at position 1098 (Ser1098) is a Phosphoserine. Residues 1162-1171 (HPQSDGVDST) are compositionally biased toward polar residues. The segment covering 1172-1191 (SHTDVKSDPLGHPNSEETVK) has biased composition (basic and acidic residues). Residues 1215-1225 (KSWQQTTFQNR) show a composition bias toward polar residues. Ser1228 carries the post-translational modification Phosphoserine. Residues 1265–1276 (EKPSTTYQQPDS) show a composition bias toward polar residues. Residues 1393–1403 (LEKNDIKDRGP) show a composition bias toward basic and acidic residues. Phosphoserine occurs at positions 1413, 1415, and 1417. Residues 1418–1714 (DGELQDRKKV…KKERSRKKDS (297 aa)) are interaction with TUBA1A. Residues 1421–1431 (LQDRKKVRVEV) are compositionally biased toward basic and acidic residues. The AWS domain occupies 1494-1548 (IKRMQCECTPLSKDERAQGEIACGEDCLNRLLMIECSSRCPNGDYCSNRRFQRKQ). Cys1499, Cys1501, Cys1516, Cys1520, Cys1529, Cys1533, and Cys1539 together coordinate Zn(2+). The region spanning 1550–1667 (ADVEVILTEK…SGSELTFDYQ (118 aa)) is the SET domain. Residues 1560 to 1562 (KGW), 1603 to 1605 (HYY), and 1628 to 1629 (NH) contribute to the S-adenosyl-L-methionine site. Zn(2+) is bound at residue Cys1631. Residues 1674–1690 (EAQKCFCGSANCRGYLG) enclose the Post-SET domain. S-adenosyl-L-methionine is bound at residue Gln1676. Cys1678 provides a ligand contact to Zn(2+). Position 1679 (Phe1679) interacts with S-adenosyl-L-methionine. Residues Cys1680 and Cys1685 each coordinate Zn(2+). A phosphoserine mark is found at Ser1696, Ser1844, and Ser1845. Residues 1831–1872 (KTAVPPLSEGDGYSSENTSRAHTPLNTPDPSTKLSTEADTDT) form a disordered region. Polar residues predominate over residues 1844–1867 (SSENTSRAHTPLNTPDPSTKLSTE). 2 positions are modified to phosphothreonine: Thr1853 and Thr1872. At Ser1888 the chain carries Phosphoserine. Residues 1921-2142 (EELQSQQLLP…EAQKQQQQMQ (222 aa)) form a disordered region. Residues 1924-1935 (QSQQLLPQQLPE) show a composition bias toward low complexity. Ser1952 bears the Phosphoserine mark. Residues 1960–1972 (IEPKESNGTKLEE) show a composition bias toward basic and acidic residues. Residues 1973-1990 (PINEETPSQDEEEGVSDV) show a composition bias toward acidic residues. Ser1980, Ser1988, and Ser1995 each carry phosphoserine. 3 stretches are compositionally biased toward basic and acidic residues: residues 1991-2004 (ESERSQEQPDKTVD), 2014-2046 (DSWKDLKEVYRIPKKSQTEKENTTTERGRDAVG), and 2059-2072 (RSRERDPDKQTQNK). Ser2080 and Ser2082 each carry phosphoserine. 2 stretches are compositionally biased toward basic and acidic residues: residues 2090-2100 (RGTKRPDDRYD) and 2111-2135 (KDRNKLSTEERRKLFEQEVAQREAQ). A coiled-coil region spans residues 2117 to 2146 (STEERRKLFEQEVAQREAQKQQQQMQNLGM). Residues 2137-2366 (QQQQMQNLGM…APGQPQPLQP (230 aa)) form a low charge region region. In terms of domain architecture, WW spans 2389 to 2422 (IVLPPNWKTARDPEGKIYYYHVITRQTQWDPPTW). A disordered region spans residues 2439–2465 (LGTPTYDENPMKASKKPKTAEADTSSE). Residues 2457–2564 (TAEADTSSEL…YKPKEDTELE (108 aa)) are interaction with POLR2A.

Belongs to the class V-like SAM-binding methyltransferase superfamily. Histone-lysine methyltransferase family. SET2 subfamily. In terms of assembly, specifically interacts with hyperphosphorylated C-terminal domain (CTD) of RNA polymerase II large subunit (POLR2A): binds to CTD heptad repeats doubly phosphorylated on 'Ser-2' and 'Ser-5' of each heptad. Interacts with HTT. Interacts with IWS1. Interacts with p53/TP53; leading to regulate p53/TP53 target genes. Component of a complex with HNRNPL. Interacts with TUBA1A; the interaction is independent on alpha-tubulin acetylation on 'Lys-40'. Interacts with STAT1. Post-translationally, may be automethylated. As to expression, ubiquitously expressed.

It localises to the nucleus. Its subcellular location is the chromosome. It carries out the reaction L-lysyl(36)-[histone H3] + 3 S-adenosyl-L-methionine = N(6),N(6),N(6)-trimethyl-L-lysyl(36)-[histone H3] + 3 S-adenosyl-L-homocysteine + 3 H(+). The enzyme catalyses L-lysyl-[protein] + S-adenosyl-L-methionine = N(6)-methyl-L-lysyl-[protein] + S-adenosyl-L-homocysteine + H(+). The catalysed reaction is L-lysyl-[protein] + 3 S-adenosyl-L-methionine = N(6),N(6),N(6)-trimethyl-L-lysyl-[protein] + 3 S-adenosyl-L-homocysteine + 3 H(+). With respect to regulation, specifically inhibited by sinefungin derivatives. N-propyl sinefungin (Pr-SNF) interacts preferentially with SETD2. Histone methyltransferase that specifically trimethylates 'Lys-36' of histone H3 (H3K36me3) using dimethylated 'Lys-36' (H3K36me2) as substrate. It is capable of trimethylating unmethylated H3K36 (H3K36me0) in vitro. Represents the main enzyme generating H3K36me3, a specific tag for epigenetic transcriptional activation. Plays a role in chromatin structure modulation during elongation by coordinating recruitment of the FACT complex and by interacting with hyperphosphorylated POLR2A. Acts as a key regulator of DNA mismatch repair in G1 and early S phase by generating H3K36me3, a mark required to recruit MSH6 subunit of the MutS alpha complex: early recruitment of the MutS alpha complex to chromatin to be replicated allows a quick identification of mismatch DNA to initiate the mismatch repair reaction. Required for DNA double-strand break repair in response to DNA damage: acts by mediating formation of H3K36me3, promoting recruitment of RAD51 and DNA repair via homologous recombination (HR). Acts as a tumor suppressor. H3K36me3 also plays an essential role in the maintenance of a heterochromatic state, by recruiting DNA methyltransferase DNMT3A. H3K36me3 is also enhanced in intron-containing genes, suggesting that SETD2 recruitment is enhanced by splicing and that splicing is coupled to recruitment of elongating RNA polymerase. Required during angiogenesis. Required for endoderm development by promoting embryonic stem cell differentiation toward endoderm: acts by mediating formation of H3K36me3 in distal promoter regions of FGFR3, leading to regulate transcription initiation of FGFR3. In addition to histones, also mediates methylation of other proteins, such as tubulins and STAT1. Trimethylates 'Lys-40' of alpha-tubulins such as TUBA1B (alpha-TubK40me3); alpha-TubK40me3 is required for normal mitosis and cytokinesis and may be a specific tag in cytoskeletal remodeling. Involved in interferon-alpha-induced antiviral defense by mediating both monomethylation of STAT1 at 'Lys-525' and catalyzing H3K36me3 on promoters of some interferon-stimulated genes (ISGs) to activate gene transcription. Functionally, (Microbial infection) Recruited to the promoters of adenovirus 12 E1A gene in case of infection, possibly leading to regulate its expression. In Homo sapiens (Human), this protein is Histone-lysine N-methyltransferase SETD2 (SETD2).